The chain runs to 137 residues: Nucleoside diphosphate kinase (137 aa).

ATP is bound by residues K10, F58, R86, T92, R103, and N113. Residue H116 is the Pros-phosphohistidine intermediate of the active site.

Belongs to the NDK family. In terms of assembly, homotetramer. Mg(2+) serves as cofactor.

Its subcellular location is the cytoplasm. The enzyme catalyses a 2'-deoxyribonucleoside 5'-diphosphate + ATP = a 2'-deoxyribonucleoside 5'-triphosphate + ADP. It carries out the reaction a ribonucleoside 5'-diphosphate + ATP = a ribonucleoside 5'-triphosphate + ADP. Major role in the synthesis of nucleoside triphosphates other than ATP. The ATP gamma phosphate is transferred to the NDP beta phosphate via a ping-pong mechanism, using a phosphorylated active-site intermediate. This Helicobacter pylori (strain P12) protein is Nucleoside diphosphate kinase.